Consider the following 376-residue polypeptide: Small ribosomal subunit protein uS11m (376 aa).

Belongs to the universal ribosomal protein uS11 family. In terms of assembly, component of the mitochondrial small ribosomal subunit (mt-SSU). Mature N.crassa 74S mitochondrial ribosomes consist of a small (37S) and a large (54S) subunit. The 37S small subunit contains a 16S ribosomal RNA (16S mt-rRNA) and 32 different proteins. The 54S large subunit contains a 23S rRNA (23S mt-rRNA) and 42 different proteins.

The protein resides in the mitochondrion. Component of the mitochondrial ribosome (mitoribosome), a dedicated translation machinery responsible for the synthesis of mitochondrial genome-encoded proteins, including at least some of the essential transmembrane subunits of the mitochondrial respiratory chain. The mitoribosomes are attached to the mitochondrial inner membrane and translation products are cotranslationally integrated into the membrane. The protein is Small ribosomal subunit protein uS11m (mrps18) of Neurospora crassa (strain ATCC 24698 / 74-OR23-1A / CBS 708.71 / DSM 1257 / FGSC 987).